Consider the following 544-residue polypeptide: Lysophosphatidylcholine acyltransferase 2 (544 aa).

At 1-57 (MSRCAQAAEVAATVPGAGVGNVGLRPPMVPRQASFFPPPVPNPFVQQTQIGSARRVQ) the chain is on the cytoplasmic side. A helical; Signal-anchor for type II membrane protein membrane pass occupies residues 58–78 (IVLLGIILLPIRVLLVALILL). The Lumenal portion of the chain corresponds to 79–544 (LAWPFAAIST…EESTSDKKDD (466 aa)). The short motif at 146-151 (HSTFFD) is the HXXXXD motif element. Positions 220 to 223 (EGTC) match the EGTC motif motif. 2 EF-hand domains span residues 391 to 426 (PVSD…LCNP) and 428 to 463 (NTEE…SLGV). Residues D404, N406, D408, S410, E415, D441, D443, D445, Y447, and E452 each coordinate Ca(2+). A compositionally biased stretch (polar residues) spans 518 to 529 (VQTTPSTASNKV). The disordered stretch occupies residues 518 to 544 (VQTTPSTASNKVSPEKHEESTSDKKDD). Residues 530–544 (SPEKHEESTSDKKDD) are compositionally biased toward basic and acidic residues.

This sequence belongs to the 1-acyl-sn-glycerol-3-phosphate acyltransferase family.

The protein localises to the endoplasmic reticulum membrane. It localises to the golgi apparatus membrane. The protein resides in the cell membrane. It is found in the lipid droplet. The enzyme catalyses a 1-acyl-sn-glycero-3-phosphocholine + an acyl-CoA = a 1,2-diacyl-sn-glycero-3-phosphocholine + CoA. It catalyses the reaction a 1-O-alkyl-sn-glycero-3-phosphocholine + acetyl-CoA = a 1-O-alkyl-2-acetyl-sn-glycero-3-phosphocholine + CoA. The catalysed reaction is a 1-acyl-sn-glycero-3-phosphate + an acyl-CoA = a 1,2-diacyl-sn-glycero-3-phosphate + CoA. It carries out the reaction a 1-O-(1Z-alkenyl)-sn-glycero-3-phosphocholine + an acyl-CoA = a 1-O-(1Z-alkenyl)-2-acyl-sn-glycero-3-phosphocholine + CoA. The enzyme catalyses 1-hexadecanoyl-sn-glycero-3-phosphate + (9Z)-octadecenoyl-CoA = 1-hexadecanoyl-2-(9Z-octadecenoyl)-sn-glycero-3-phosphate + CoA. It catalyses the reaction 1-(9Z-octadecenoyl)-sn-glycero-3-phosphate + (9Z)-octadecenoyl-CoA = 1,2-di-(9Z-octadecenoyl)-sn-glycero-3-phosphate + CoA. The catalysed reaction is 1-(9Z-octadecenoyl)-sn-glycero-3-phosphate + hexadecanoyl-CoA = 1-(9Z)-octadecenoyl-2-hexadecanoyl-sn-glycero-3-phosphate + CoA. It carries out the reaction 1-heptadecanoyl-sn-glycero-3-phosphate + (9Z)-octadecenoyl-CoA = 1-heptadecanoyl-2-(9Z)-octadecenoyl-sn-glycero-3-phosphate + CoA. The enzyme catalyses 1-octadecanoyl-sn-glycero-3-phosphate + (9Z)-octadecenoyl-CoA = 1-octadecanoyl-2-(9Z-octadecenoyl)-sn-glycero-3-phosphate + CoA. It catalyses the reaction heptadecanoyl-CoA + 1-(9Z-octadecenoyl)-sn-glycero-3-phosphate = 1-(9Z)-octadecenoyl-2-heptadecanoyl-sn-glycero-3-phosphate + CoA. The catalysed reaction is 1-(9Z-octadecenoyl)-sn-glycero-3-phosphate + (9Z,12Z)-octadecadienoyl-CoA = 1-(9Z)-octadecenoyl-2-(9Z,12Z)-octadecadienoyl-sn-glycero-3-phosphate + CoA. It carries out the reaction 1-(9Z-octadecenoyl)-sn-glycero-3-phosphate + tetradecanoyl-CoA = 1-(9Z)-octadecenoyl-2-tetradecanoyl-sn-glycero-3-phosphate + CoA. The enzyme catalyses pentadecanoyl-CoA + 1-(9Z-octadecenoyl)-sn-glycero-3-phosphate = 1-(9Z)-octadecenoyl-2-pentadecanoyl-sn-glycero-3-phosphate + CoA. It catalyses the reaction nonadecanoyl-CoA + 1-(9Z-octadecenoyl)-sn-glycero-3-phosphate = 1-(9Z)-octadecenoyl-2-nonadecanoyl-sn-glycero-3-phosphate + CoA. The catalysed reaction is 1-hexadecanoyl-sn-glycero-3-phosphocholine + (9Z)-octadecenoyl-CoA = 1-hexadecanoyl-2-(9Z-octadecenoyl)-sn-glycero-3-phosphocholine + CoA. It carries out the reaction 1-O-hexadecyl-sn-glycero-3-phosphocholine + acetyl-CoA = 1-O-hexadecyl-2-acetyl-sn-glycero-3-phosphocholine + CoA. The enzyme catalyses 1-O-octadecyl-sn-glycero-3-phosphocholine + acetyl-CoA = 1-O-octadecyl-2-acetyl-sn-glycero-3-phosphocholine + CoA. It catalyses the reaction 1-hexadecanoyl-sn-glycero-3-phosphocholine + acetyl-CoA = 1-hexadecanoyl-2-acetyl-sn-glycero-3-phosphocholine + CoA. The catalysed reaction is 1-octadecanoyl-sn-glycero-3-phosphocholine + acetyl-CoA = 1-octadecanoyl-2-acetyl-sn-glycero-3-phosphocholine + CoA. It carries out the reaction a 1-O-(1Z-alkenyl)-sn-glycero-3-phosphocholine + acetyl-CoA = 1-O-(1Z)-alkenyl-2-acetyl-sn-glycero-3-phosphocholine + CoA. The enzyme catalyses 1-O-octadecyl-sn-glycero-3-phosphocholine + (5Z,8Z,11Z,14Z)-eicosatetraenoyl-CoA = 1-O-octadecyl-2-(5Z,8Z,11Z,14Z)-eicosatetraenoyl-sn-glycero-3-phosphocholine + CoA. The protein operates within lipid metabolism; phospholipid metabolism. Exhibits both acyltransferase and acetyltransferase activities. Catalyzes the conversion of lysophosphatidylcholine (1-acyl-sn-glycero-3-phosphocholine or LPC) into phosphatidylcholine (1,2-diacyl-sn-glycero-3-phosphocholine or PC). Catalyzes the conversion 1-acyl-sn-glycerol-3-phosphate (lysophosphatidic acid or LPA) into 1,2-diacyl-sn-glycerol-3-phosphate (phosphatidic acid or PA) by incorporating an acyl moiety at the sn-2 position of the glycerol backbone. Involved in platelet-activating factor (PAF) biosynthesis by catalyzing the conversion of the PAF precursor, 1-O-alkyl-sn-glycero-3-phosphocholine (lyso-PAF) into 1-O-alkyl-2-acetyl-sn-glycero-3-phosphocholine (PAF). Also converts lyso-PAF to 1-O-alkyl-2-acyl-sn-glycero-3-phosphocholine (PC), a major component of cell membranes and a PAF precursor. Under resting conditions, acyltransferase activity is preferred. Upon acute inflammatory stimulus, acetyltransferase activity is enhanced and PAF synthesis increases. Involved in the regulation of lipid droplet number and size. The chain is Lysophosphatidylcholine acyltransferase 2 (LPCAT2) from Homo sapiens (Human).